The following is a 390-amino-acid chain: Protein-glutamate methylesterase/protein-glutamine glutaminase 1 (390 aa).

Positions 4 to 121 (KVLVVDDSGF…SRNPQKVKQL (118 aa)) constitute a Response regulatory domain. Asp55 carries the 4-aspartylphosphate modification. Residues 132–186 (SNRRSSGIGSASAASPAPAAPAPSTLSSRAPAPSAAAPARAVPSRTVAPAAAPAA) show a composition bias toward low complexity. The disordered stretch occupies residues 132-201 (SNRRSSGIGS…PAHPTTTGTA (70 aa)). Residues 195–387 (PTTTGTAKRK…LDDIGRHLVE (193 aa)) enclose the CheB-type methylesterase domain. Catalysis depends on residues Ser214, His241, and Asp334.

The protein belongs to the CheB family. In terms of processing, phosphorylated by CheA. Phosphorylation of the N-terminal regulatory domain activates the methylesterase activity.

It is found in the cytoplasm. It carries out the reaction [protein]-L-glutamate 5-O-methyl ester + H2O = L-glutamyl-[protein] + methanol + H(+). The enzyme catalyses L-glutaminyl-[protein] + H2O = L-glutamyl-[protein] + NH4(+). Functionally, involved in chemotaxis. Part of a chemotaxis signal transduction system that modulates chemotaxis in response to various stimuli. Catalyzes the demethylation of specific methylglutamate residues introduced into the chemoreceptors (methyl-accepting chemotaxis proteins or MCP) by CheR. Also mediates the irreversible deamidation of specific glutamine residues to glutamic acid. This is Protein-glutamate methylesterase/protein-glutamine glutaminase 1 from Pseudomonas syringae pv. tomato (strain ATCC BAA-871 / DC3000).